The chain runs to 291 residues: 33 kDa chaperonin (291 aa).

2 disulfide bridges follow: Cys229/Cys231 and Cys262/Cys265.

This sequence belongs to the HSP33 family. Post-translationally, under oxidizing conditions two disulfide bonds are formed involving the reactive cysteines. Under reducing conditions zinc is bound to the reactive cysteines and the protein is inactive.

Its subcellular location is the cytoplasm. In terms of biological role, redox regulated molecular chaperone. Protects both thermally unfolding and oxidatively damaged proteins from irreversible aggregation. Plays an important role in the bacterial defense system toward oxidative stress. This chain is 33 kDa chaperonin, found in Vibrio parahaemolyticus serotype O3:K6 (strain RIMD 2210633).